Consider the following 612-residue polypeptide: Chaperone protein DnaK (612 aa).

Thr-173 is modified (phosphothreonine; by autocatalysis). The segment at 576–612 (AAKQAQAQQDGGAGAKKADDNVVDAEYEEVNDDKDQK) is disordered. Residues 596–612 (NVVDAEYEEVNDDKDQK) are compositionally biased toward acidic residues.

It belongs to the heat shock protein 70 family.

Functionally, acts as a chaperone. The protein is Chaperone protein DnaK of Bacillus licheniformis (strain ATCC 14580 / DSM 13 / JCM 2505 / CCUG 7422 / NBRC 12200 / NCIMB 9375 / NCTC 10341 / NRRL NRS-1264 / Gibson 46).